Here is a 128-residue protein sequence, read N- to C-terminus: Elongation factor G (128 aa).

This sequence belongs to the GTP-binding elongation factor family. EF-G/EF-2 subfamily.

The protein localises to the cytoplasm. In terms of biological role, catalyzes the GTP-dependent ribosomal translocation step during translation elongation. During this step, the ribosome changes from the pre-translocational (PRE) to the post-translocational (POST) state as the newly formed A-site-bound peptidyl-tRNA and P-site-bound deacylated tRNA move to the P and E sites, respectively. Catalyzes the coordinated movement of the two tRNA molecules, the mRNA and conformational changes in the ribosome. This Planobispora rosea protein is Elongation factor G (fusA).